Consider the following 451-residue polypeptide: Phosphoglucosamine mutase (451 aa).

Ser102 serves as the catalytic Phosphoserine intermediate. Mg(2+) is bound by residues Ser102, Asp243, Asp245, and Asp247. Ser102 is subject to Phosphoserine.

Belongs to the phosphohexose mutase family. It depends on Mg(2+) as a cofactor. Post-translationally, activated by phosphorylation.

It catalyses the reaction alpha-D-glucosamine 1-phosphate = D-glucosamine 6-phosphate. Its function is as follows. Catalyzes the conversion of glucosamine-6-phosphate to glucosamine-1-phosphate. The polypeptide is Phosphoglucosamine mutase (Brucella abortus (strain 2308)).